The following is a 143-amino-acid chain: MPRPRKTRTVRTDLAVHFYKPQGIPLRDLQSVTLSLDGLEALRLADVEGLEHAAGADSMGISRPTFSRLLTEARTTVATALVEGWAIHIDGGPVAQGPALDGSACPNRRQRRGPCARRGAAGALARQTGDEPPSSPTDNEKDD.

Residues 100 to 143 (LDGSACPNRRQRRGPCARRGAAGALARQTGDEPPSSPTDNEKDD) are disordered. The span at 116–126 (ARRGAAGALAR) shows a compositional bias: low complexity.

This sequence belongs to the UPF0251 family.

In Rhodospirillum rubrum (strain ATCC 11170 / ATH 1.1.1 / DSM 467 / LMG 4362 / NCIMB 8255 / S1), this protein is UPF0251 protein Rru_A1194.